We begin with the raw amino-acid sequence, 255 residues long: Hydroxyacylglutathione hydrolase (255 aa).

Zn(2+) contacts are provided by H56, H58, D60, H61, H114, D133, and H171.

This sequence belongs to the metallo-beta-lactamase superfamily. Glyoxalase II family. Monomer. The cofactor is Zn(2+).

The enzyme catalyses an S-(2-hydroxyacyl)glutathione + H2O = a 2-hydroxy carboxylate + glutathione + H(+). The protein operates within secondary metabolite metabolism; methylglyoxal degradation; (R)-lactate from methylglyoxal: step 2/2. Thiolesterase that catalyzes the hydrolysis of S-D-lactoyl-glutathione to form glutathione and D-lactic acid. The sequence is that of Hydroxyacylglutathione hydrolase from Cereibacter sphaeroides (strain ATCC 17023 / DSM 158 / JCM 6121 / CCUG 31486 / LMG 2827 / NBRC 12203 / NCIMB 8253 / ATH 2.4.1.) (Rhodobacter sphaeroides).